The chain runs to 345 residues: Phosphoribosylformylglycinamidine cyclo-ligase (345 aa).

It belongs to the AIR synthase family.

It is found in the cytoplasm. It catalyses the reaction 2-formamido-N(1)-(5-O-phospho-beta-D-ribosyl)acetamidine + ATP = 5-amino-1-(5-phospho-beta-D-ribosyl)imidazole + ADP + phosphate + H(+). It participates in purine metabolism; IMP biosynthesis via de novo pathway; 5-amino-1-(5-phospho-D-ribosyl)imidazole from N(2)-formyl-N(1)-(5-phospho-D-ribosyl)glycinamide: step 2/2. This is Phosphoribosylformylglycinamidine cyclo-ligase from Escherichia coli O45:K1 (strain S88 / ExPEC).